Here is a 549-residue protein sequence, read N- to C-terminus: Chaperonin GroEL (549 aa).

Residues 30–33 (TLGP), Lys51, 87–91 (DGTTT), Gly415, 479–481 (NAA), and Asp495 contribute to the ATP site.

The protein belongs to the chaperonin (HSP60) family. Forms a cylinder of 14 subunits composed of two heptameric rings stacked back-to-back. Interacts with the co-chaperonin GroES.

The protein localises to the cytoplasm. The enzyme catalyses ATP + H2O + a folded polypeptide = ADP + phosphate + an unfolded polypeptide.. Its function is as follows. Together with its co-chaperonin GroES, plays an essential role in assisting protein folding. The GroEL-GroES system forms a nano-cage that allows encapsulation of the non-native substrate proteins and provides a physical environment optimized to promote and accelerate protein folding. This chain is Chaperonin GroEL, found in Stenotrophomonas maltophilia (strain K279a).